A 213-amino-acid chain; its full sequence is Orotate phosphoribosyltransferase (213 aa).

Residue Lys26 participates in 5-phospho-alpha-D-ribose 1-diphosphate binding. An orotate-binding site is contributed by 34 to 35; sequence FF. 5-phospho-alpha-D-ribose 1-diphosphate contacts are provided by residues 72–73, Arg99, Lys100, Lys103, His105, and 124–132; these read YK and DDVITAGTA. Positions 128 and 156 each coordinate orotate.

Belongs to the purine/pyrimidine phosphoribosyltransferase family. PyrE subfamily. As to quaternary structure, homodimer. Mg(2+) is required as a cofactor.

The catalysed reaction is orotidine 5'-phosphate + diphosphate = orotate + 5-phospho-alpha-D-ribose 1-diphosphate. It functions in the pathway pyrimidine metabolism; UMP biosynthesis via de novo pathway; UMP from orotate: step 1/2. Catalyzes the transfer of a ribosyl phosphate group from 5-phosphoribose 1-diphosphate to orotate, leading to the formation of orotidine monophosphate (OMP). The sequence is that of Orotate phosphoribosyltransferase from Yersinia enterocolitica serotype O:8 / biotype 1B (strain NCTC 13174 / 8081).